We begin with the raw amino-acid sequence, 250 residues long: Pyridoxine 5'-phosphate synthase (250 aa).

2 residues coordinate 3-amino-2-oxopropyl phosphate: asparagine 8 and arginine 19. Histidine 44 functions as the Proton acceptor in the catalytic mechanism. The 1-deoxy-D-xylulose 5-phosphate site is built by arginine 46 and histidine 51. Glutamate 76 functions as the Proton acceptor in the catalytic mechanism. Residue threonine 106 participates in 1-deoxy-D-xylulose 5-phosphate binding. Histidine 200 (proton donor) is an active-site residue. 3-amino-2-oxopropyl phosphate contacts are provided by residues aspartate 201 and 223 to 224 (GH).

This sequence belongs to the PNP synthase family. Homooctamer; tetramer of dimers.

It localises to the cytoplasm. It carries out the reaction 3-amino-2-oxopropyl phosphate + 1-deoxy-D-xylulose 5-phosphate = pyridoxine 5'-phosphate + phosphate + 2 H2O + H(+). Its pathway is cofactor biosynthesis; pyridoxine 5'-phosphate biosynthesis; pyridoxine 5'-phosphate from D-erythrose 4-phosphate: step 5/5. Its function is as follows. Catalyzes the complicated ring closure reaction between the two acyclic compounds 1-deoxy-D-xylulose-5-phosphate (DXP) and 3-amino-2-oxopropyl phosphate (1-amino-acetone-3-phosphate or AAP) to form pyridoxine 5'-phosphate (PNP) and inorganic phosphate. This Allorhizobium ampelinum (strain ATCC BAA-846 / DSM 112012 / S4) (Agrobacterium vitis (strain S4)) protein is Pyridoxine 5'-phosphate synthase.